Reading from the N-terminus, the 519-residue chain is Cysteine--tRNA ligase (519 aa).

Cys-30 serves as a coordination point for Zn(2+). The 'HIGH' region motif lies at 32–42 (PTVYDRAHLGN). The Zn(2+) site is built by Cys-221, His-253, and Glu-257. A 'KMSKS' region motif is present at residues 286 to 290 (KMSKS). Residue Lys-289 coordinates ATP.

It belongs to the class-I aminoacyl-tRNA synthetase family. As to quaternary structure, monomer. It depends on Zn(2+) as a cofactor.

It is found in the cytoplasm. It carries out the reaction tRNA(Cys) + L-cysteine + ATP = L-cysteinyl-tRNA(Cys) + AMP + diphosphate. The protein is Cysteine--tRNA ligase of Cereibacter sphaeroides (strain KD131 / KCTC 12085) (Rhodobacter sphaeroides).